Consider the following 158-residue polypeptide: Protein-export protein SecB (158 aa).

It belongs to the SecB family. Homotetramer, a dimer of dimers. One homotetramer interacts with 1 SecA dimer.

It is found in the cytoplasm. In terms of biological role, one of the proteins required for the normal export of preproteins out of the cell cytoplasm. It is a molecular chaperone that binds to a subset of precursor proteins, maintaining them in a translocation-competent state. It also specifically binds to its receptor SecA. The sequence is that of Protein-export protein SecB from Photorhabdus laumondii subsp. laumondii (strain DSM 15139 / CIP 105565 / TT01) (Photorhabdus luminescens subsp. laumondii).